The chain runs to 316 residues: Glutathione synthetase (316 aa).

The ATP-grasp domain occupies 124-311; that stretch reads NEKLAALLFP…IAGLLFDAIE (188 aa). An ATP-binding site is contributed by 151–208; that stretch reads FVLAHGQAVLKPLDGMGGRSIFRSGTGDPNLNVILETLTDGGRKLTLAQRFIPDITAG. Mg(2+)-binding residues include E282 and N284.

The protein belongs to the prokaryotic GSH synthase family. Mg(2+) serves as cofactor. Mn(2+) is required as a cofactor.

It catalyses the reaction gamma-L-glutamyl-L-cysteine + glycine + ATP = glutathione + ADP + phosphate + H(+). Its pathway is sulfur metabolism; glutathione biosynthesis; glutathione from L-cysteine and L-glutamate: step 2/2. This Xanthomonas campestris pv. campestris (strain ATCC 33913 / DSM 3586 / NCPPB 528 / LMG 568 / P 25) protein is Glutathione synthetase.